The following is a 277-amino-acid chain: Small ribosomal subunit protein uS3 (277 aa).

The KH type-2 domain maps to 38–106 (IRRLLATGLE…QVQLNILEVK (69 aa)). Positions 217–277 (AGVEAGRGAP…SAPSAETTES (61 aa)) are disordered. Basic and acidic residues predominate over residues 225–235 (APDRPRRERPA). Residues 242–261 (SGSSGTTATSTEAGRAAAET) show a composition bias toward low complexity.

Belongs to the universal ribosomal protein uS3 family. Part of the 30S ribosomal subunit. Forms a tight complex with proteins S10 and S14.

In terms of biological role, binds the lower part of the 30S subunit head. Binds mRNA in the 70S ribosome, positioning it for translation. This is Small ribosomal subunit protein uS3 from Mycobacteroides abscessus (strain ATCC 19977 / DSM 44196 / CCUG 20993 / CIP 104536 / JCM 13569 / NCTC 13031 / TMC 1543 / L948) (Mycobacterium abscessus).